A 309-amino-acid polypeptide reads, in one-letter code: Aspartate carbamoyltransferase catalytic subunit (309 aa).

The carbamoyl phosphate site is built by R49 and T50. K77 provides a ligand contact to L-aspartate. Residues R99, H127, and Q130 each contribute to the carbamoyl phosphate site. 2 residues coordinate L-aspartate: R160 and R211. Residues A252 and P253 each contribute to the carbamoyl phosphate site.

This sequence belongs to the aspartate/ornithine carbamoyltransferase superfamily. ATCase family. In terms of assembly, heterododecamer (2C3:3R2) of six catalytic PyrB chains organized as two trimers (C3), and six regulatory PyrI chains organized as three dimers (R2).

The enzyme catalyses carbamoyl phosphate + L-aspartate = N-carbamoyl-L-aspartate + phosphate + H(+). It functions in the pathway pyrimidine metabolism; UMP biosynthesis via de novo pathway; (S)-dihydroorotate from bicarbonate: step 2/3. In terms of biological role, catalyzes the condensation of carbamoyl phosphate and aspartate to form carbamoyl aspartate and inorganic phosphate, the committed step in the de novo pyrimidine nucleotide biosynthesis pathway. This is Aspartate carbamoyltransferase catalytic subunit from Geobacillus sp. (strain WCH70).